Reading from the N-terminus, the 147-residue chain is Deoxyuridine 5'-triphosphate nucleotidohydrolase (147 aa).

Substrate is bound by residues 67-69 (RSG), Asn-80, and 84-86 (TID).

The protein belongs to the dUTPase family. Mg(2+) is required as a cofactor.

It carries out the reaction dUTP + H2O = dUMP + diphosphate + H(+). Its pathway is pyrimidine metabolism; dUMP biosynthesis; dUMP from dCTP (dUTP route): step 2/2. This enzyme is involved in nucleotide metabolism: it produces dUMP, the immediate precursor of thymidine nucleotides and it decreases the intracellular concentration of dUTP so that uracil cannot be incorporated into DNA. The chain is Deoxyuridine 5'-triphosphate nucleotidohydrolase from Anaplasma marginale (strain St. Maries).